We begin with the raw amino-acid sequence, 622 residues long: Carbon monoxide dehydrogenase (622 aa).

Residues Cys-40, Cys-49, Cys-52, Cys-57, and Cys-68 each coordinate [4Fe-4S] cluster. Residues His-256, Cys-334, Cys-442, Cys-473, and Cys-514 each coordinate [Ni-4Fe-5S] cluster.

This sequence belongs to the Ni-containing carbon monoxide dehydrogenase family. In terms of assembly, homodimer. Requires [4Fe-4S] cluster as cofactor. The cofactor is [Ni-4Fe-5S] cluster.

It catalyses the reaction CO + 2 oxidized [2Fe-2S]-[ferredoxin] + H2O = 2 reduced [2Fe-2S]-[ferredoxin] + CO2 + 2 H(+). Its function is as follows. CODH oxidizes carbon monoxide coupled, via CooF, to the reduction of a hydrogen cation by a hydrogenase (possibly CooH). The polypeptide is Carbon monoxide dehydrogenase (cooS) (Archaeoglobus fulgidus (strain ATCC 49558 / DSM 4304 / JCM 9628 / NBRC 100126 / VC-16)).